The chain runs to 122 residues: Large ribosomal subunit protein uL14 (122 aa).

This sequence belongs to the universal ribosomal protein uL14 family. As to quaternary structure, part of the 50S ribosomal subunit. Forms a cluster with proteins L3 and L19. In the 70S ribosome, L14 and L19 interact and together make contacts with the 16S rRNA in bridges B5 and B8.

Functionally, binds to 23S rRNA. Forms part of two intersubunit bridges in the 70S ribosome. The sequence is that of Large ribosomal subunit protein uL14 from Syntrophobacter fumaroxidans (strain DSM 10017 / MPOB).